The primary structure comprises 34 residues: Corticostatin-2 (34 aa).

Disulfide bonds link Cys3-Cys32, Cys5-Cys21, and Cys11-Cys31.

This sequence belongs to the alpha-defensin family.

It localises to the secreted. In terms of biological role, microbicidal activity and inhibits corticotropin (ACTH) stimulated corticosterone production. The protein is Corticostatin-2 of Oryctolagus cuniculus (Rabbit).